The sequence spans 471 residues: V-type ATP synthase beta chain (471 aa).

The protein belongs to the ATPase alpha/beta chains family.

Its function is as follows. Produces ATP from ADP in the presence of a proton gradient across the membrane. The V-type beta chain is a regulatory subunit. This Deinococcus radiodurans (strain ATCC 13939 / DSM 20539 / JCM 16871 / CCUG 27074 / LMG 4051 / NBRC 15346 / NCIMB 9279 / VKM B-1422 / R1) protein is V-type ATP synthase beta chain (atpB).